Here is a 154-residue protein sequence, read N- to C-terminus: 3-hydroxyacyl-[acyl-carrier-protein] dehydratase FabZ (154 aa).

Residue His57 is part of the active site.

Belongs to the thioester dehydratase family. FabZ subfamily.

The protein resides in the cytoplasm. It carries out the reaction a (3R)-hydroxyacyl-[ACP] = a (2E)-enoyl-[ACP] + H2O. In terms of biological role, involved in unsaturated fatty acids biosynthesis. Catalyzes the dehydration of short chain beta-hydroxyacyl-ACPs and long chain saturated and unsaturated beta-hydroxyacyl-ACPs. This is 3-hydroxyacyl-[acyl-carrier-protein] dehydratase FabZ from Allorhizobium ampelinum (strain ATCC BAA-846 / DSM 112012 / S4) (Agrobacterium vitis (strain S4)).